The following is a 277-amino-acid chain: Myelin proteolipid protein (277 aa).

The Cytoplasmic portion of the chain corresponds to M1–C10. Residues C6, C7, and C10 are each lipidated (S-palmitoyl cysteine). The helical transmembrane segment at L11 to G36 threads the bilayer. Topologically, residues H37–E59 are extracellular. A helical membrane pass occupies residues Y60–A88. Topologically, residues E89–K151 are cytoplasmic. C109 is lipidated: S-palmitoyl cysteine. S114 carries the post-translational modification Phosphoserine. Phosphothreonine occurs at positions 116 and 118. C141 is lipidated: S-palmitoyl cysteine. A helical membrane pass occupies residues F152 to F178. The Extracellular portion of the chain corresponds to N179–H238. 2 disulfides stabilise this stretch: C184-C228 and C201-C220. Residue S199 is the site of O-palmitoyl serine attachment. The helical transmembrane segment at L239 to L268 threads the bilayer. Over K269–F277 the chain is Cytoplasmic.

It belongs to the myelin proteolipid protein family.

It localises to the cell membrane. Its subcellular location is the myelin membrane. In terms of biological role, this is the major myelin protein from the central nervous system. It plays an important role in the formation or maintenance of the multilamellar structure of myelin. This chain is Myelin proteolipid protein (PLP1), found in Macaca fascicularis (Crab-eating macaque).